A 74-amino-acid polypeptide reads, in one-letter code: U3-agatoxin-Ao1b (74 aa).

A signal peptide spans 1–20; it reads MKAAISLIIFFAILFVVIEA. A propeptide spanning residues 21–34 is cleaved from the precursor; sequence ISYEEGKELFQKER. Disulfide bonds link Cys-37–Cys-53, Cys-44–Cys-58, Cys-52–Cys-68, and Cys-60–Cys-66. Ser-72 carries the post-translational modification Serine amide.

It belongs to the neurotoxin 07 (Beta/delta-agtx) family. 02 (aga-3) subfamily. As to expression, expressed by the venom gland.

It is found in the secreted. Functionally, insecticidal neurotoxin that induces an irreversible spastic paralysis when injected into insects. Modifies presynaptic voltage-gated sodium channels (Nav), causing them to open at the normal resting potential of the nerve. This leads to spontaneous release of neurotransmitter and repetitive action potentials in motor neurons. This Agelena orientalis (Funnel-web spider) protein is U3-agatoxin-Ao1b.